Reading from the N-terminus, the 131-residue chain is Histone H2B (131 aa).

Residues 1 to 19 show a composition bias toward basic and acidic residues; it reads MAPKAEKKPASKAPAEKKP. The segment at 1–38 is disordered; sequence MAPKAEKKPASKAPAEKKPAAKKTASSTDGGKKRTKAR. N6-acetyllysine; alternate occurs at positions 7 and 8. Glycyl lysine isopeptide (Lys-Gly) (interchain with G-Cter in SUMO); alternate cross-links involve residues lysine 7 and lysine 8. At serine 11 the chain carries Phosphoserine. Residue lysine 12 is modified to N6-acetyllysine. Position 17 is an N6-acetyllysine; alternate (lysine 17). A Glycyl lysine isopeptide (Lys-Gly) (interchain with G-Cter in SUMO); alternate cross-link involves residue lysine 17. Lysine 18 is covalently cross-linked (Glycyl lysine isopeptide (Lys-Gly) (interchain with G-Cter in SUMO)). A Glycyl lysine isopeptide (Lys-Gly) (interchain with G-Cter in ubiquitin) cross-link involves residue lysine 125.

Belongs to the histone H2B family. In terms of assembly, the nucleosome is a histone octamer containing two molecules each of H2A, H2B, H3 and H4 assembled in one H3-H4 heterotetramer and two H2A-H2B heterodimers. The octamer wraps approximately 147 bp of DNA. Post-translationally, monoubiquitinated by the UBC2-BRE1 complex to form H2BK123ub1. H2BK123ub1 gives a specific tag for epigenetic transcriptional activation and is also prerequisite for H3K4me and H3K79me formation. H2BK123ub1 also modulates the formation of double-strand breaks during meiosis and is a prerequisite for DNA-damage checkpoint activation. Phosphorylated by STE20 to form H2BS10ph during progression through meiotic prophase. May be correlated with chromosome condensation. In terms of processing, acetylated by GCN5 to form H2BK11ac and H2BK16ac. H2BK16ac can also be formed by ESA1. Acetylation of N-terminal lysines and particularly formation of H2BK11acK16ac has a positive effect on transcription. Post-translationally, sumoylation to form H2BK6su or H2BK7su, and probably also H2BK16su or H2BK17su, occurs preferentially near the telomeres and represses gene transcription.

The protein resides in the nucleus. It localises to the chromosome. Its function is as follows. Core component of nucleosome. Nucleosomes wrap and compact DNA into chromatin, limiting DNA accessibility to the cellular machineries which require DNA as a template. Histones thereby play a central role in transcription regulation, DNA repair, DNA replication and chromosomal stability. DNA accessibility is regulated via a complex set of post-translational modifications of histones, also called histone code, and nucleosome remodeling. This Lodderomyces elongisporus (strain ATCC 11503 / CBS 2605 / JCM 1781 / NBRC 1676 / NRRL YB-4239) (Yeast) protein is Histone H2B (HTB1).